Here is a 385-residue protein sequence, read N- to C-terminus: MKYSTLVSIAAFISTSLAATVPDEHYSTLSPSAKIPSGASTDFSGTFGIQVVTVESASALSTDTATSTLTRNDNKKEATPVAQITDGQVQHQTTGGVSAIKQISDGQVQHQTNAAQPIAQISDGQIQHQTTAKATATPVQQINDGQIQHQTTVQPVAQISDGQIQHQTAKATATPVQQIGDGQIQHQTTVQPVAQISDGQIQHQTVKASATPVQQIGDGQIQHQTTAAAATTASAVKQINDGQIQHQTTTAENVAKAQSDGQAIATGSPSSNSTLSDDDDLSSTIPKACSSANNLEMTLHDSVLKDTHERWGAIVANHQFQFDGPIPQAGTIYSAGWSIKDGYLYLGDSNIFYQCLSGDFYNLYDENVAKQCSAVKLSVIEFVNC.

An N-terminal signal peptide occupies residues 1–18 (MKYSTLVSIAAFISTSLA). PIR1/2/3 repeat units lie at residues 78–96 (ATPV…TTGG), 97–115 (VSAI…TNAA), 116–133 (QPIA…TTAK), 136–153 (ATPV…QTTV), 154–171 (QPVA…TAKA), 173–190 (ATPV…QTTV), 191–208 (QPVA…TVKA), 210–228 (ATPV…TTAA), and 233–251 (ASAV…TTTA). Positions 257–282 (AQSDGQAIATGSPSSNSTLSDDDDLS) are disordered. N272 carries N-linked (GlcNAc...) asparagine glycosylation.

This sequence belongs to the PIR protein family. Post-translationally, covalently linked to beta-1,3-glucan of the inner cell wall layer via an alkali-sensitive ester linkage between the gamma-carboxyl group of glutamic acids, arising from specific glutamines within the PIR1/2/3 repeats, and hydroxyl groups of glucoses of beta-1,3-glucan chains. Highly O-glycosylated by PMT1 and contains one N-mannosylated chain.

It is found in the secreted. The protein localises to the cell wall. Functionally, component of the outer cell wall layer required for stability of the cell wall and specifically for cell wall rigidity. The polypeptide is Cell wall mannoprotein PIR1 (PIR1) (Candida albicans (strain SC5314 / ATCC MYA-2876) (Yeast)).